We begin with the raw amino-acid sequence, 391 residues long: Somatostatin receptor type 1 (391 aa).

The disordered stretch occupies residues 1–50 (MFPNGTASSPSSSPSPSPGSCGEGACSRGPGSGAADGMEEPGRNASQNGT). The Extracellular portion of the chain corresponds to 1 to 56 (MFPNGTASSPSSSPSPSPGSCGEGACSRGPGSGAADGMEEPGRNASQNGTLSEGQG). Asn4 is a glycosylation site (N-linked (GlcNAc...) asparagine). Over residues 8–20 (SSPSSSPSPSPGS) the composition is skewed to low complexity. Residues Asn44 and Asn48 are each glycosylated (N-linked (GlcNAc...) asparagine). A helical transmembrane segment spans residues 57 to 84 (SAILISFIYSVVCLVGLCGNSMVIYVIL). At 85–94 (RYAKMKTATN) the chain is on the cytoplasmic side. The chain crosses the membrane as a helical span at residues 95-120 (IYILNLAIADELLMLSVPFLVTSTLL). Residues 121-131 (RHWPFGALLCR) lie on the Extracellular side of the membrane. Cys130 and Cys208 are disulfide-bonded. A helical membrane pass occupies residues 132–153 (LVLSVDAVNMFTSIYCLTVLSV). Over 154 to 175 (DRYVAVVHPIKAARYRRPTVAK) the chain is Cytoplasmic. Residues 176-196 (VVNLGVWVLSLLVILPIVVFS) traverse the membrane as a helical segment. Over 197–219 (RTAANSDGTVACNMLMPEPAQRW) the chain is Extracellular. Residues 220 to 244 (LVGFVLYTFLMGFLLPVGAICLCYV) form a helical membrane-spanning segment. At 245–270 (LIIAKMRMVALKAGWQQRKRSERKIT) the chain is on the cytoplasmic side. A helical membrane pass occupies residues 271–296 (LMVMMVVMVFVICWMPFYVVQLVNVF). The Extracellular portion of the chain corresponds to 297-303 (AEQDDAT). A helical membrane pass occupies residues 304-327 (VSQLSVILGYANSCANPILYGFLS). The Cytoplasmic portion of the chain corresponds to 328–391 (DNFKRSFQRI…GTCASRISTL (64 aa)). Residue Cys339 is the site of S-palmitoyl cysteine attachment.

Belongs to the G-protein coupled receptor 1 family. As to expression, jejunum and stomach.

Its subcellular location is the cell membrane. Receptor for somatostatin with higher affinity for somatostatin-14 than -28. This receptor is coupled via pertussis toxin sensitive G proteins to inhibition of adenylyl cyclase. In addition it stimulates phosphotyrosine phosphatase and Na(+)/H(+) exchanger via pertussis toxin insensitive G proteins. The polypeptide is Somatostatin receptor type 1 (Sstr1) (Mus musculus (Mouse)).